A 179-amino-acid chain; its full sequence is tRNA (cytidine(56)-2'-O)-methyltransferase (179 aa).

Residue Leu84 participates in S-adenosyl-L-methionine binding.

It belongs to the aTrm56 family. In terms of assembly, homodimer.

The protein localises to the cytoplasm. The catalysed reaction is cytidine(56) in tRNA + S-adenosyl-L-methionine = 2'-O-methylcytidine(56) in tRNA + S-adenosyl-L-homocysteine + H(+). In terms of biological role, specifically catalyzes the AdoMet-dependent 2'-O-ribose methylation of cytidine at position 56 in tRNAs. The sequence is that of tRNA (cytidine(56)-2'-O)-methyltransferase from Methanothermobacter thermautotrophicus (strain ATCC 29096 / DSM 1053 / JCM 10044 / NBRC 100330 / Delta H) (Methanobacterium thermoautotrophicum).